Consider the following 150-residue polypeptide: Large-conductance mechanosensitive channel (150 aa).

2 consecutive transmembrane segments (helical) span residues V19–L39 and G85–I105.

Belongs to the MscL family. In terms of assembly, homopentamer.

The protein localises to the cell inner membrane. Functionally, channel that opens in response to stretch forces in the membrane lipid bilayer. May participate in the regulation of osmotic pressure changes within the cell. The sequence is that of Large-conductance mechanosensitive channel from Chlorobium limicola (strain DSM 245 / NBRC 103803 / 6330).